An 878-amino-acid polypeptide reads, in one-letter code: Alanine--tRNA ligase (878 aa).

Positions 567, 571, 669, and 673 each coordinate Zn(2+).

It belongs to the class-II aminoacyl-tRNA synthetase family. Zn(2+) serves as cofactor.

Its subcellular location is the cytoplasm. It carries out the reaction tRNA(Ala) + L-alanine + ATP = L-alanyl-tRNA(Ala) + AMP + diphosphate. Its function is as follows. Catalyzes the attachment of alanine to tRNA(Ala) in a two-step reaction: alanine is first activated by ATP to form Ala-AMP and then transferred to the acceptor end of tRNA(Ala). Also edits incorrectly charged Ser-tRNA(Ala) and Gly-tRNA(Ala) via its editing domain. The protein is Alanine--tRNA ligase of Rickettsia canadensis (strain McKiel).